A 312-amino-acid chain; its full sequence is Olfactory receptor 6C76 (312 aa).

Residues 1-23 (MKNRTSVTDFILLGLTDNPQLQV) lie on the Extracellular side of the membrane. Residue Asn-3 is glycosylated (N-linked (GlcNAc...) asparagine). The chain crosses the membrane as a helical span at residues 24–44 (VIFSFLFLTYVLSVTGNLTII). Over 45-57 (SLTLLDSHLKTPM) the chain is Cytoplasmic. The helical transmembrane segment at 58 to 80 (YFFLRNFSLEISFTSVCNPRFLI) threads the bilayer. Residues 81–94 (SILTGDKSISYNAC) are Extracellular-facing. The cysteines at positions 94 and 176 are disulfide-linked. The chain crosses the membrane as a helical span at residues 95-115 (AAQLFFFIFLGSTEFFLLASM). At 116–142 (SYDCYVAICKPLHYTTIMSDRICYQLI) the chain is on the cytoplasmic side. A helical transmembrane segment spans residues 143-163 (ISSWLAGFLVIFPPLAMGLQL). The Extracellular portion of the chain corresponds to 164–195 (DFCDSNVIDHFTCDSAPLLQISCTDTSTLELM). A helical transmembrane segment spans residues 196–216 (SFILALFTLISTLILVILSYT). Topologically, residues 217–238 (YIIRTILRIPSAQQRKKAFSTC) are cytoplasmic. The chain crosses the membrane as a helical span at residues 239-259 (SSHVIVVSISYGSCIFMYVKT). Residues 260–267 (SAKEGVAL) lie on the Extracellular side of the membrane. A helical membrane pass occupies residues 268–288 (TKGVAILNTSVAPMLNPFIYT). Topologically, residues 289–312 (LRNQQVKQAFKDVLRKISHKKKKH) are cytoplasmic.

This sequence belongs to the G-protein coupled receptor 1 family.

The protein localises to the cell membrane. Its function is as follows. Odorant receptor. The polypeptide is Olfactory receptor 6C76 (OR6C76) (Homo sapiens (Human)).